The following is a 233-amino-acid chain: Large ribosomal subunit protein uL1 (233 aa).

Belongs to the universal ribosomal protein uL1 family. As to quaternary structure, part of the 50S ribosomal subunit.

In terms of biological role, binds directly to 23S rRNA. The L1 stalk is quite mobile in the ribosome, and is involved in E site tRNA release. Functionally, protein L1 is also a translational repressor protein, it controls the translation of the L11 operon by binding to its mRNA. The sequence is that of Large ribosomal subunit protein uL1 from Geobacillus stearothermophilus (Bacillus stearothermophilus).